The chain runs to 110 residues: UPF0060 membrane protein BTH_I2792 (110 aa).

4 helical membrane-spanning segments follow: residues 9–29, 34–54, 64–84, and 86–106; these read ALFV…WLVL, PVWL…LLTL, AAYG…VDGV, and LSRW…VIAL.

It belongs to the UPF0060 family.

It localises to the cell inner membrane. The sequence is that of UPF0060 membrane protein BTH_I2792 from Burkholderia thailandensis (strain ATCC 700388 / DSM 13276 / CCUG 48851 / CIP 106301 / E264).